Here is a 475-residue protein sequence, read N- to C-terminus: Aminodeoxychorismate synthase component 1 (475 aa).

Belongs to the anthranilate synthase component I family. As to quaternary structure, monomer. Heterodimer consisting of two non-identical subunits: a glutamine amidotransferase subunit (PabA) and a aminodeoxychorismate synthase subunit (PabB). The cofactor is Mg(2+).

It catalyses the reaction chorismate + L-glutamine = 4-amino-4-deoxychorismate + L-glutamate. It functions in the pathway cofactor biosynthesis; tetrahydrofolate biosynthesis; 4-aminobenzoate from chorismate: step 1/2. In terms of biological role, part of a heterodimeric complex that catalyzes the two-step biosynthesis of 4-amino-4-deoxychorismate (ADC), a precursor of p-aminobenzoate (PABA) and tetrahydrofolate. In the first step, a glutamine amidotransferase (PabA) generates ammonia as a substrate that, along with chorismate, is used in the second step, catalyzed by aminodeoxychorismate synthase (PabB) to produce ADC. The polypeptide is Aminodeoxychorismate synthase component 1 (pabB) (Streptomyces lividans).